The primary structure comprises 974 residues: Zinc finger protein 280D (974 aa).

Glycyl lysine isopeptide (Lys-Gly) (interchain with G-Cter in SUMO2) cross-links involve residues Lys44, Lys46, Lys86, Lys99, Lys138, Lys201, Lys222, Lys245, Lys287, and Lys304. Residues 188 to 216 are disordered; that stretch reads KRPSGSDISSVNPKKPKPSENTSGIDASS. 2 consecutive C2H2-type zinc fingers follow at residues 333 to 355 and 370 to 393; these read FKCF…MKHH and TTCQ…ESTH. The C2H2-type 3; degenerate zinc finger occupies 400-424; the sequence is TICKICELSFETEQILLQHMKDNHK. 2 C2H2-type zinc fingers span residues 430 to 453 and 459 to 481; these read YICQ…RTSH and LLCP…YMKH. Disordered regions lie at residues 507–624, 751–797, and 815–974; these read TQHH…KVNT, IKTE…EGTG, and VTVS…EERS. Over residues 539-557 the composition is skewed to low complexity; the sequence is SGSSVTPSISPSTSTLQLS. Ser557 is subject to Phosphoserine. Polar residues predominate over residues 571–587; the sequence is KLTTSTPNTTISDPSKA. Residues 591–611 are compositionally biased toward low complexity; it reads KSNGSKSKNKSKVSNMQKKQS. A compositionally biased stretch (polar residues) spans 612–624; sequence TLSSSNKKSKVNT. A Glycyl lysine isopeptide (Lys-Gly) (interchain with G-Cter in SUMO2) cross-link involves residue Lys752. Residues 763 to 775 are compositionally biased toward basic and acidic residues; it reads VSKETARHSRAEG. The segment covering 817–829 has biased composition (polar residues); the sequence is VSDTENVSSSKNI. Positions 830-860 are enriched in basic and acidic residues; that stretch reads LSHDPDVGTDTMEKEEKTHHACQEMELKVDQ. Over residues 861–884 the composition is skewed to polar residues; sequence SSESTNPTEAELSSETRQGLQLTS. 2 positions are modified to phosphoserine: Ser904 and Ser907. A compositionally biased stretch (polar residues) spans 938 to 950; the sequence is SANTSDTVSDQTG.

It is found in the nucleus. Its function is as follows. May function as a transcription factor. In Mus musculus (Mouse), this protein is Zinc finger protein 280D (Znf280d).